A 270-amino-acid chain; its full sequence is Very long chain fatty acid elongase 3 (270 aa).

N-linked (GlcNAc...) asparagine glycosylation occurs at Asn-6. The next 2 membrane-spanning stretches (helical) occupy residues 29–49 (FFEE…VLIA) and 63–83 (LQGP…LGAV). Residue Asn-110 is glycosylated (N-linked (GlcNAc...) asparagine). The next 5 membrane-spanning stretches (helical) occupy residues 115 to 135 (FWSW…AFII), 140 to 160 (PLIF…SFGY), 164 to 184 (VPAG…MYTY), 198 to 218 (LPML…IVSI), and 235 to 255 (HLFW…HFFC). The short motif at 266 to 270 (KTKSQ) is the Di-lysine motif element.

Belongs to the ELO family. ELOVL3 subfamily. Interacts with TECR. Post-translationally, N-Glycosylated. In terms of tissue distribution, testis.

It is found in the endoplasmic reticulum membrane. It carries out the reaction a very-long-chain acyl-CoA + malonyl-CoA + H(+) = a very-long-chain 3-oxoacyl-CoA + CO2 + CoA. The enzyme catalyses eicosanoyl-CoA + malonyl-CoA + H(+) = 3-oxodocosanoyl-CoA + CO2 + CoA. It catalyses the reaction hexadecanoyl-CoA + malonyl-CoA + H(+) = 3-oxooctadecanoyl-CoA + CO2 + CoA. The catalysed reaction is octadecanoyl-CoA + malonyl-CoA + H(+) = 3-oxoeicosanoyl-CoA + CO2 + CoA. It carries out the reaction (9Z)-octadecenoyl-CoA + malonyl-CoA + H(+) = 3-oxo-(11Z)-eicosenoyl-CoA + CO2 + CoA. The enzyme catalyses (9Z,12Z)-octadecadienoyl-CoA + malonyl-CoA + H(+) = (11Z,14Z)-3-oxoicosa-11,14-dienoyl-CoA + CO2 + CoA. It catalyses the reaction (9Z,12Z,15Z)-octadecatrienoyl-CoA + malonyl-CoA + H(+) = (11Z,14Z,17Z)-3-oxoeicosatrienoyl-CoA + CO2 + CoA. The catalysed reaction is docosanoyl-CoA + malonyl-CoA + H(+) = 3-oxotetracosanoyl-CoA + CO2 + CoA. It carries out the reaction tetradecanoyl-CoA + malonyl-CoA + H(+) = 3-oxohexadecanoyl-CoA + CO2 + CoA. It participates in lipid metabolism; polyunsaturated fatty acid biosynthesis. Its function is as follows. Catalyzes the first and rate-limiting reaction of the four reactions that constitute the long-chain fatty acids elongation cycle. This endoplasmic reticulum-bound enzymatic process allows the addition of 2 carbons to the chain of long- and very long-chain fatty acids (VLCFAs) per cycle. Condensing enzyme that exhibits activity toward saturated and unsaturated acyl-CoA substrates with higher activity toward C18 acyl-CoAs, especially C18:0 acyl-CoAs. May participate in the production of saturated and monounsaturated VLCFAs of different chain lengths that are involved in multiple biological processes as precursors of membrane lipids and lipid mediators. This Homo sapiens (Human) protein is Very long chain fatty acid elongase 3.